The sequence spans 1197 residues: Probable DNA polymerase (1197 aa).

It belongs to the DNA polymerase type-B family.

It localises to the mitochondrion. The catalysed reaction is DNA(n) + a 2'-deoxyribonucleoside 5'-triphosphate = DNA(n+1) + diphosphate. This chain is Probable DNA polymerase, found in Podospora anserina (Pleurage anserina).